A 131-amino-acid polypeptide reads, in one-letter code: D-ribose pyranase (131 aa).

Residue H20 is the Proton donor of the active site. Residues D28, H98, and 120-122 (YAN) contribute to the substrate site.

The protein belongs to the RbsD / FucU family. RbsD subfamily. In terms of assembly, homodecamer.

The protein resides in the cytoplasm. It catalyses the reaction beta-D-ribopyranose = beta-D-ribofuranose. The protein operates within carbohydrate metabolism; D-ribose degradation; D-ribose 5-phosphate from beta-D-ribopyranose: step 1/2. In terms of biological role, catalyzes the interconversion of beta-pyran and beta-furan forms of D-ribose. This Bacillus cereus (strain AH187) protein is D-ribose pyranase.